A 1526-amino-acid chain; its full sequence is Probable autotransporter YpjA (1526 aa).

An N-terminal signal peptide occupies residues 1 to 29 (MNRTSPYYCRRSVLSLLISALIYAPPGMA). Positions 1173–1223 (NSNWNLTNDVKPNPDPIPNPKPDPKPDPKPDPNPKPDPTPDPTPTPVPEKR) are disordered. Residues 1194-1206 (PDPKPDPKPDPNP) show a composition bias toward basic and acidic residues. Residues 1207-1219 (KPDPTPDPTPTPV) are compositionally biased toward pro residues. One can recognise an Autotransporter domain in the interval 1258-1526 (ASPHNNNVWG…NAVAGVNWSF (269 aa)).

The protein localises to the cell outer membrane. Functionally, upon overexpression shows increased adherence to polyvinyl chloride (PVC) plates, increased mature biofilm formation. This chain is Probable autotransporter YpjA (ypjA), found in Escherichia coli (strain K12).